A 273-amino-acid polypeptide reads, in one-letter code: Gamma-glutamyl cyclotransferase aclK (273 aa).

The protein belongs to the class-I pyridoxal-phosphate-dependent aminotransferase family.

The catalysed reaction is an alpha-(gamma-L-glutamyl)-L-amino acid = 5-oxo-L-proline + an L-alpha-amino acid. Its pathway is mycotoxin biosynthesis. Gamma-glutamyl cyclotransferase; part of the gene cluster that mediates the biosynthesis of aspirochlorine (or antibiotic A30641), an unusual halogenated spiro compound with distinctive antifungal properties due to selective inhibition of protein biosynthesis, and which is also active against bacteria, viruses, and murine tumor cells. The non-ribosomal peptide synthetase (NRPS) aclP is responsible the formation of the diketopiperazine (DKP) core from the condensation of 2 phenylalanine residues. One Phe residue is tailored into chlorotyrosine by hydroxylation and chlorination, whereas the second Phe undergoes an unprecedented C-C bond cleavage to be converted into glycine. After formation of the DKP, sulfur is incorporated into the DKP by conjugation with glutathione by aclG, followed by its stepwise degradation to the thiol by aclI, aclJ and aclK, and the dithiol oxidation by aclT. In addition, oxygenases (aclB, aclC, aclL and aclO) and O-methyltransferases (aclM and aclU) act as tailoring enzymes to produce the intermediate dechloroaspirochlorine. Ultimately, chlorination of dechloroaspirochlorine by the halogenase aclH is the last step in the aspirochlorine pathway. In Aspergillus oryzae (strain ATCC 42149 / RIB 40) (Yellow koji mold), this protein is Gamma-glutamyl cyclotransferase aclK.